The chain runs to 483 residues: Rhamnulokinase (483 aa).

An ATP-binding site is contributed by 11 to 15; that stretch reads ASSGR. Substrate contacts are provided by residues glycine 79 and 234–236; that span reads HDT. Aspartate 235 (proton acceptor) is an active-site residue. Threonine 257 is a binding site for ATP. Asparagine 294 contributes to the substrate binding site. Glutamine 302 is a binding site for ATP. Cysteine 352 and cysteine 369 are disulfide-bonded. Position 401 (glycine 401) interacts with ATP.

It belongs to the rhamnulokinase family. The cofactor is Mg(2+).

The enzyme catalyses L-rhamnulose + ATP = L-rhamnulose 1-phosphate + ADP + H(+). The protein operates within carbohydrate degradation; L-rhamnose degradation; glycerone phosphate from L-rhamnose: step 2/3. Involved in the catabolism of L-rhamnose (6-deoxy-L-mannose). Catalyzes the transfer of the gamma-phosphate group from ATP to the 1-hydroxyl group of L-rhamnulose to yield L-rhamnulose 1-phosphate. The polypeptide is Rhamnulokinase (Listeria monocytogenes serovar 1/2a (strain ATCC BAA-679 / EGD-e)).